The primary structure comprises 75 residues: Mu-conotoxin GIIIA (75 aa).

Residues 1-20 form the signal peptide; it reads MMSKLGVLLTICLLLFPLTA. Residues 21-51 constitute a propeptide that is removed on maturation; that stretch reads LPMDGDEPANRPVERMQDNISSEQYPLFEKR. 3 disulfide bridges follow: Cys54–Cys66, Cys55–Cys71, and Cys61–Cys72. 2 positions are modified to 4-hydroxyproline; partial: Pro57 and Pro58. Pro68 carries the post-translational modification 4-hydroxyproline. Alanine amide is present on Ala73.

It belongs to the conotoxin M superfamily. In terms of processing, hydroxylated; hydroxylations improve the ability to block Nav1.4/SCN4A sodium channels but does not affect folding. Expressed by the venom duct.

It is found in the secreted. Functionally, mu-conotoxins block voltage-gated sodium channels (Nav). This toxin potently blocks rat Nav1.4/SCN4A (IC(50)= 19-110 nM). It also moderately blocks rNav1.1/SCN1A (Kd=260 nM), rNav1.2/SCN2A (IC(50)=2.7-17.8 uM), and mNav1.6/SCN8A (IC(50)=680 nM). The inhibition is reversible. In vivo, induces paralysis to an isolated skeletal muscle preparation from frog (cutaneous pectoralis) within a few minutes. In Conus geographus (Geography cone), this protein is Mu-conotoxin GIIIA.